Here is a 1168-residue protein sequence, read N- to C-terminus: ATP-dependent DNA helicase mph1 (1168 aa).

2 stretches are compositionally biased toward polar residues: residues 24 to 38 and 59 to 68; these read NITS…QLAS and PTVSQGQATA. Positions 24–132 are disordered; sequence NITSHHPSNS…PFRADMPPEQ (109 aa). Low complexity predominate over residues 71–88; that stretch reads RAKTASKPTTSATTSRPS. The span at 89-104 shows a compositional bias: polar residues; it reads LAQSSQRKNLRQTTLW. One can recognise a Helicase ATP-binding domain in the interval 162-330; the sequence is IVKNGLFNNT…DVIDNLGISH (169 aa). Residue 175-182 coordinates ATP; that stretch reads LPTGLGKT. Residues 278-281 carry the DEAH box motif; it reads DEAH. Residues 506-665 enclose the Helicase C-terminal domain; the sequence is LVNHFMDAGE…GSRFTFRHDL (160 aa). Disordered stretches follow at residues 690–717 and 830–1168; these read SQNP…FNMP and APAN…DDQE. Positions 701–714 are enriched in basic residues; the sequence is SAARMRTKPAKKKF. Residues 895 to 907 are compositionally biased toward polar residues; it reads TAKTKSTGVSKQT. Residues 920–936 show a composition bias toward acidic residues; that stretch reads DCEEGGNEYDGNVDDDE. Residues 941–959 are compositionally biased toward basic residues; it reads RNFRSKGRGRGSGRGKKSQ. Over residues 985–996 the composition is skewed to acidic residues; it reads GSDDGADLEDFI. A compositionally biased stretch (polar residues) spans 1001–1030; sequence EVTSSLQHRPRGSTSPTTAPDAGSSSLSSK.

The protein belongs to the DEAD box helicase family. DEAH subfamily. FANCM sub-subfamily. As to quaternary structure, interacts with the MHF histone-fold complex to form the FANCM-MHF complex.

It localises to the nucleus. The enzyme catalyses ATP + H2O = ADP + phosphate + H(+). In terms of biological role, ATP-dependent DNA helicase involved in DNA damage repair by homologous recombination and in genome maintenance. Capable of unwinding D-loops. Plays a role in limiting crossover recombinants during mitotic DNA double-strand break (DSB) repair. Component of a FANCM-MHF complex which promotes gene conversion at blocked replication forks, probably by reversal of the stalled fork. The sequence is that of ATP-dependent DNA helicase mph1 from Neurospora crassa (strain ATCC 24698 / 74-OR23-1A / CBS 708.71 / DSM 1257 / FGSC 987).